We begin with the raw amino-acid sequence, 313 residues long: 4-hydroxy-3-methylbut-2-enyl diphosphate reductase (313 aa).

Cys-20 is a [4Fe-4S] cluster binding site. (2E)-4-hydroxy-3-methylbut-2-enyl diphosphate-binding residues include His-49 and His-82. His-49 and His-82 together coordinate dimethylallyl diphosphate. Residues His-49 and His-82 each contribute to the isopentenyl diphosphate site. A [4Fe-4S] cluster-binding site is contributed by Cys-104. His-132 provides a ligand contact to (2E)-4-hydroxy-3-methylbut-2-enyl diphosphate. Dimethylallyl diphosphate is bound at residue His-132. His-132 contributes to the isopentenyl diphosphate binding site. Glu-134 acts as the Proton donor in catalysis. Thr-172 serves as a coordination point for (2E)-4-hydroxy-3-methylbut-2-enyl diphosphate. [4Fe-4S] cluster is bound at residue Cys-201. (2E)-4-hydroxy-3-methylbut-2-enyl diphosphate is bound by residues Ser-229, Ser-230, Asn-231, and Ser-273. Positions 229, 230, 231, and 273 each coordinate dimethylallyl diphosphate. Isopentenyl diphosphate-binding residues include Ser-229, Ser-230, Asn-231, and Ser-273.

This sequence belongs to the IspH family. It depends on [4Fe-4S] cluster as a cofactor.

The enzyme catalyses isopentenyl diphosphate + 2 oxidized [2Fe-2S]-[ferredoxin] + H2O = (2E)-4-hydroxy-3-methylbut-2-enyl diphosphate + 2 reduced [2Fe-2S]-[ferredoxin] + 2 H(+). The catalysed reaction is dimethylallyl diphosphate + 2 oxidized [2Fe-2S]-[ferredoxin] + H2O = (2E)-4-hydroxy-3-methylbut-2-enyl diphosphate + 2 reduced [2Fe-2S]-[ferredoxin] + 2 H(+). It functions in the pathway isoprenoid biosynthesis; dimethylallyl diphosphate biosynthesis; dimethylallyl diphosphate from (2E)-4-hydroxy-3-methylbutenyl diphosphate: step 1/1. It participates in isoprenoid biosynthesis; isopentenyl diphosphate biosynthesis via DXP pathway; isopentenyl diphosphate from 1-deoxy-D-xylulose 5-phosphate: step 6/6. Functionally, catalyzes the conversion of 1-hydroxy-2-methyl-2-(E)-butenyl 4-diphosphate (HMBPP) into a mixture of isopentenyl diphosphate (IPP) and dimethylallyl diphosphate (DMAPP). Acts in the terminal step of the DOXP/MEP pathway for isoprenoid precursor biosynthesis. This chain is 4-hydroxy-3-methylbut-2-enyl diphosphate reductase, found in Desulfotalea psychrophila (strain LSv54 / DSM 12343).